The sequence spans 145 residues: Transcription antitermination protein NusB (145 aa).

The protein belongs to the NusB family.

Functionally, involved in transcription antitermination. Required for transcription of ribosomal RNA (rRNA) genes. Binds specifically to the boxA antiterminator sequence of the ribosomal RNA (rrn) operons. The protein is Transcription antitermination protein NusB of Psychromonas ingrahamii (strain DSM 17664 / CCUG 51855 / 37).